We begin with the raw amino-acid sequence, 177 residues long: Endoribonuclease YbeY (177 aa).

Zn(2+) contacts are provided by His-118, His-122, and His-128.

The protein belongs to the endoribonuclease YbeY family. The cofactor is Zn(2+).

Its subcellular location is the cytoplasm. Its function is as follows. Single strand-specific metallo-endoribonuclease involved in late-stage 70S ribosome quality control and in maturation of the 3' terminus of the 16S rRNA. The sequence is that of Endoribonuclease YbeY from Mycolicibacterium paratuberculosis (strain ATCC BAA-968 / K-10) (Mycobacterium paratuberculosis).